Here is a 504-residue protein sequence, read N- to C-terminus: Melianol synthase CYP71BQ5 (504 aa).

A helical transmembrane segment spans residues 2 to 22 (EFRLPSLPVFLSFLLFFLMLV). A heme-binding site is contributed by C442.

It belongs to the cytochrome P450 family. Requires heme as cofactor. In terms of tissue distribution, mainly expressed in fruits and leaves.

The protein resides in the membrane. It catalyses the reaction dihydroniloticin + 2 reduced [NADPH--hemoprotein reductase] + 2 O2 = melianol + 2 oxidized [NADPH--hemoprotein reductase] + 3 H2O + 2 H(+). It participates in secondary metabolite biosynthesis; terpenoid biosynthesis. Functionally, monooxygenase involved in the biosynthesis of limonoids triterpene natural products such as azadirachtin, an antifeedant widely used as bioinsecticide, and possessing many medicinal applications including anti-tumoral, anti-malarial, anti-rheumatic, antibacterial, anti-inflammatory, anti-pyretic and diuretic effects. Catalyzes the conversion of dihydroniloticin to the protolimonoid melianol. This Azadirachta indica (Neem tree) protein is Melianol synthase CYP71BQ5.